Reading from the N-terminus, the 486-residue chain is Mogroside I-E synthase (486 aa).

9 residues coordinate UDP-alpha-D-glucose: S302, C360, Q362, W380, N381, S382, E385, D401, and Q402.

It belongs to the UDP-glycosyltransferase family. As to expression, highly expressed in young fruits 15 days after anthesis (15-DAA).

It catalyses the reaction mogrol + UDP-alpha-D-glucose = mogroside IE + UDP + H(+). It carries out the reaction mogroside I-A1 + UDP-alpha-D-glucose = mogroside IIE + UDP + H(+). The catalysed reaction is mogroside II-A1 + UDP-alpha-D-glucose = mogroside IIIX + UDP + H(+). The enzyme catalyses mogroside II-A + UDP-alpha-D-glucose = mogroside III + UDP + H(+). It participates in secondary metabolite biosynthesis; terpenoid biosynthesis. In terms of biological role, UDP-glycosyltransferase involved in the biosynthesis of cucurbitacin and mogroside tetracyclic triterpene natural products (e.g. siamenoside I and mogrosides IV, V and VI). Cucurbitacins have cytotoxic properties and exhibit deterrent taste as a defense barrier against herbivores. Mogrosides are nonsugar highly oxygenated compounds used as high-intensity zero-calorie sweeteners; they also possess pharmacological properties such as regulating immunity, lowering blood sugar and lipid levels, protecting the liver, and acting as antioxidants and antitumor agents. Catalyzes the C3 primary glucosylation of mogrol, mogroside I-A1, mogroside II-A1 and mogroside II-A. The protein is Mogroside I-E synthase of Siraitia grosvenorii (Monk's fruit).